Consider the following 363-residue polypeptide: Mitochondrial phosphate carrier protein 2, mitochondrial (363 aa).

Residues 65-85 traverse the membrane as a helical segment; that stretch reads AYFAACTVAGMLSCGITHTAI. 3 Solcar repeats span residues 65–149, 162–246, and 263–342; these read AYFA…AKKY, YKTL…TVEL, and VQLG…VKVL. The Mitochondrial matrix segment spans residues 86 to 123; sequence TPLDVIKCNMQIDPLKYKNITSAFKTTIKEQGLKGFTR. Residues 124-143 form a helical membrane-spanning segment; that stretch reads GWSPTLLGYSAQGAFKYGLY. At 144-164 the chain is on the mitochondrial intermembrane side; sequence EYAKKYYSDIVGPEYAAKYKT. The chain crosses the membrane as a helical span at residues 165–185; sequence LIYLAGSASAEIVADVALCPM. At 186–220 the chain is on the mitochondrial matrix side; it reads EAVKVRVQTQPGFARGLSDGLPKIIKSEGFRGLHK. Residues 221-240 traverse the membrane as a helical segment; it reads GLVPLWGRQIPYTMMKFATF. Residues 241-261 lie on the Mitochondrial intermembrane side of the membrane; the sequence is ENTVELIYKKVMPTPKEECSK. Residues 262–282 traverse the membrane as a helical segment; it reads PVQLGVSFAGGYIAGIFCAII. Topologically, residues 283 to 321 are mitochondrial matrix; the sequence is SHPADNLVSFLNNSKGATVADAVKRLGLWGMLTRGLPLR. A helical membrane pass occupies residues 322 to 342; sequence IFMIGTLTGAQWVIYDAVKVL. At 343–363 the chain is on the mitochondrial intermembrane side; that stretch reads AGLPTTGGASPATALAPSVSA.

Belongs to the mitochondrial carrier (TC 2.A.29) family. Expressed in leaves. Strong expression in senescent leaves.

It is found in the mitochondrion inner membrane. Transport of phosphate groups from the cytosol to the mitochondrial matrix. Mediates salt stress tolerance through an ATP-dependent pathway and via modulation of the gibberellin metabolism. The sequence is that of Mitochondrial phosphate carrier protein 2, mitochondrial (MPT2) from Arabidopsis thaliana (Mouse-ear cress).